The following is a 216-amino-acid chain: MRKLISLILVIIFPYISLGLSARIAFSEKFIEWEYSRKNFPEDRWGMEKEERLKLAKLGLKAVISDKGMEEFKKARLKNGKRAFTDREVKHMEDVKRFLSFFFPSVYVLSIIWIAGVFLLRSFDVLIWSGIFNSLLLLFLGILTFTNYEKAFELFHNVVFDPYSWKFRYSDTLIRIYPMKFWYDGTLFVAILSFLFGILVLFTGILGKKFLKGKGA.

4 consecutive transmembrane segments (helical) span residues 5-27 (ISLI…IAFS), 98-120 (FLSF…VFLL), 125-147 (VLIW…TFTN), and 185-207 (GTLF…GILG).

The protein localises to the cell membrane. This is an uncharacterized protein from Aquifex aeolicus (strain VF5).